Consider the following 1275-residue polypeptide: MSQFSKDQVQDMYYLSPMQEGMLFHAILNPGQSFYLEQITMKVKGSLNIKCLEESMNVIMDRYDVFRTVFIHEKVKRPVQVVLKKRQFHIEEIDLTHLTGSEQTAKINEYKEQDKIRGFDLTRDIPMRAAIFKKAEESFEWVWSYHHIILDGWCFGIVVQDLFKVYNALREQKPYSLPPVKPYKDYIKWLEKQDKQASLRYWREYLEGFEGQTTFAEQRKKQKDGYEPKELLFSLSEAETKAFTELAKSQHTTLSTALQAVWSVLISRYQQSGDLAFGTVVSGRPAEIKGVEHMVGLFINVVPRRVKLSEGITFNGLLKRLQEQSLQSEPHQYVPLYDIQSQADQPKLIDHIIVFENYPLQDAKNEESSENGFDMVDVHVFEKSNYDLNLMASPGDEMLIKLAYNENVFDEAFILRLKSQLLTAIQQLIQNPDQPVSTINLVDDREREFLLTGLNPPAQAHETKPLTYWFKEAVNANPDAPALTYSGQTLSYRELDEEANRIARRLQKHGAGKGSVVALYTKRSLELVIGILGVLKAGAAYLPVDPKLPEDRISYMLADSAAACLLTHQEMKEQAAELPYTGTTLFIDDQTRFEEQASDPATAIDPNDPAYIMYTSGTTGKPKGNITTHANIQGLVKHVDYMAFSDQDTFLSVSNYAFDAFTFDFYASMLNAARLIIADEHTLLDTERLTDLILQENVNVMFATTALFNLLTDAGEDWMKGLRCILFGGERASVPHVRKALRIMGPGKLINCYGPTEGTVFATAHVVHDLPDSISSLPIGKPISNASVYILNEQSQLQPFGAVGELCISGMGVSKGYVNRADLTKEKFIENPFKPGETLYRTGDLARWLPDGTIEYAGRIDDQVKIRGHRIELEEIEKQLQEYPGVKDAVVVADRHESGDASINAYLVNRTQLSAEDVKAHLKKQLPAYMVPQTFTFLDELPLTTNGKVNKRLLPKPDQDQLAEEWIGPRNEMEETIAQIWSEVLGRKQIGIHDDFFALGGHSLKAMTAASRIKKELGIDLPVKLLFEAPTIAGISAYLKNGGSDGLQDVTIMNQDQEQIIFAFPPVLGYGLMYQNLSSRLPSYKLCAFDFIEEEDRLDRYADLIQKLQPEGPLTLFGYSAGCSLAFEAAKKLEEQGRIVQRIIMVDSYKKQGVSDLDGRTVESDVEALMNVNRDNEALNSEAVKHGLKQKTHAFYSYYVNLISTGQVKADIDLLTSGADFDMPEWLASWEEATTGVYRVKRGFGTHAEMLQGETLDRNAEILLEFLNTQTVTVS.

The region spanning glycine 968 to glycine 1043 is the Carrier domain. At serine 1003 the chain carries O-(pantetheine 4'-phosphoryl)serine. Residues glutamine 1059–threonine 1271 are thioesterase. Active-site residues include serine 1120, aspartate 1147, and histidine 1247.

The protein belongs to the ATP-dependent AMP-binding enzyme family. Requires pantetheine 4'-phosphate as cofactor.

The protein operates within antibiotic biosynthesis; surfactin biosynthesis. Probably activates a leucine. This is Surfactin synthase subunit 3 (srfAC) from Bacillus subtilis (strain 168).